The following is a 603-amino-acid chain: Protein Spindly (603 aa).

N-acetylmethionine is present on Met1. Residues Met1–Lys442 adopt a coiled-coil conformation. 2 positions are modified to phosphoserine: Ser513 and Ser553. The interval Ala542–Glu577 is disordered. A compositionally biased stretch (basic and acidic residues) spans Arg561–Glu577.

This sequence belongs to the Spindly family. In terms of assembly, interacts with KNTC1 and ZW10. These interactions appear weak and may be transient or indirect. Interacts with dynein intermediate chain and dynactin (DCTN1). Interacts with the catalytically active form of USP45. Post-translationally, monoubiquitinated with'Lys-48' linkage. Deubiquitinated by USP45.

The protein localises to the cytoplasm. It is found in the cytoskeleton. Its subcellular location is the microtubule organizing center. It localises to the centrosome. The protein resides in the chromosome. The protein localises to the centromere. It is found in the kinetochore. Its subcellular location is the nucleus. It localises to the spindle pole. Its function is as follows. Required for the localization of dynein and dynactin to the mitotic kintochore. Dynein is believed to control the initial lateral interaction between the kinetochore and spindle microtubules and to facilitate the subsequent formation of end-on kinetochore-microtubule attachments mediated by the NDC80 complex. Also required for correct spindle orientation. Does not appear to be required for the removal of spindle assembly checkpoint (SAC) proteins from the kinetochore upon bipolar spindle attachment. Acts as an adapter protein linking the dynein motor complex to various cargos and converts dynein from a non-processive to a highly processive motor in the presence of dynactin. Facilitates the interaction between dynein and dynactin and activates dynein processivity (the ability to move along a microtubule for a long distance without falling off the track). Plays a role in cell migration. This is Protein Spindly from Bos taurus (Bovine).